The primary structure comprises 180 residues: ATP synthase subunit delta (180 aa).

The protein belongs to the ATPase delta chain family. F-type ATPases have 2 components, F(1) - the catalytic core - and F(0) - the membrane proton channel. F(1) has five subunits: alpha(3), beta(3), gamma(1), delta(1), epsilon(1). F(0) has three main subunits: a(1), b(2) and c(10-14). The alpha and beta chains form an alternating ring which encloses part of the gamma chain. F(1) is attached to F(0) by a central stalk formed by the gamma and epsilon chains, while a peripheral stalk is formed by the delta and b chains.

It is found in the cell membrane. F(1)F(0) ATP synthase produces ATP from ADP in the presence of a proton or sodium gradient. F-type ATPases consist of two structural domains, F(1) containing the extramembraneous catalytic core and F(0) containing the membrane proton channel, linked together by a central stalk and a peripheral stalk. During catalysis, ATP synthesis in the catalytic domain of F(1) is coupled via a rotary mechanism of the central stalk subunits to proton translocation. Functionally, this protein is part of the stalk that links CF(0) to CF(1). It either transmits conformational changes from CF(0) to CF(1) or is implicated in proton conduction. This Enterococcus faecalis (strain ATCC 700802 / V583) protein is ATP synthase subunit delta.